Consider the following 90-residue polypeptide: MQLFLLAALLSAAAALPIPLGQSGGSSSEQRFNLYAPQILPFFPPFPLPQAPLIPIPFPFPFDPNQVLTPNQLLELITSILNQLQGFLGR.

Positions 1–15 (MQLFLLAALLSAAAA) are cleaved as a signal peptide.

Expressed in enamel organ.

The protein resides in the secreted. Functionally, tooth-associated epithelia protein that may participate in structuring the basal lamina at cell-tooth interface. This chain is Secretory calcium-binding phosphoprotein proline-glutamine-rich 1, found in Mus musculus (Mouse).